Consider the following 201-residue polypeptide: MEKFTVVNSVAAPLKIINVDTDMIIPKQYLKTIKRTGLGKGLFSEQRYKEDGSENPDFVLNKPAYRNAQILVAGDNFGCGSSREHAPWALADFGIRCVISTSFGDIFYNNSFKNGLLPIRVTHEQLDKLFEDAERGANATLTIDLEKQEIRGPDGGVINFEIDPFRKHCLLNGLDDIGLTMQKKPSIDSFEAREKVARPWL.

This sequence belongs to the LeuD family. LeuD type 1 subfamily. In terms of assembly, heterodimer of LeuC and LeuD.

It carries out the reaction (2R,3S)-3-isopropylmalate = (2S)-2-isopropylmalate. It functions in the pathway amino-acid biosynthesis; L-leucine biosynthesis; L-leucine from 3-methyl-2-oxobutanoate: step 2/4. In terms of biological role, catalyzes the isomerization between 2-isopropylmalate and 3-isopropylmalate, via the formation of 2-isopropylmaleate. In Afipia carboxidovorans (strain ATCC 49405 / DSM 1227 / KCTC 32145 / OM5) (Oligotropha carboxidovorans), this protein is 3-isopropylmalate dehydratase small subunit.